The sequence spans 119 residues: Flagellar transcriptional regulator FlhD (119 aa).

Belongs to the FlhD family. Homodimer; disulfide-linked. Forms a heterohexamer composed of two FlhC and four FlhD subunits. Each FlhC binds a FlhD dimer, forming a heterotrimer, and a hexamer assembles by dimerization of two heterotrimers.

It localises to the cytoplasm. Its function is as follows. Functions in complex with FlhC as a master transcriptional regulator that regulates transcription of several flagellar and non-flagellar operons by binding to their promoter region. Activates expression of class 2 flagellar genes, including fliA, which is a flagellum-specific sigma factor that turns on the class 3 genes. Also regulates genes whose products function in a variety of physiological pathways. The sequence is that of Flagellar transcriptional regulator FlhD from Escherichia fergusonii (strain ATCC 35469 / DSM 13698 / CCUG 18766 / IAM 14443 / JCM 21226 / LMG 7866 / NBRC 102419 / NCTC 12128 / CDC 0568-73).